A 243-amino-acid chain; its full sequence is E3 ubiquitin-protein ligase RMA3 (243 aa).

The RING-type zinc-finger motif lies at 44 to 92; the sequence is CNICLDTAHDPVVTLCGHLFCWPCIYKWLHVQLSSVSVDQHQNNCPVCK. Residues 110 to 135 form a disordered region; sequence SPSSTFGSKKQDALSTDIPRRPAPSA. A helical; Anchor for type IV membrane protein membrane pass occupies residues 223–243; the sequence is KSLNRVSIFFLCCIILCLLLF.

As to expression, ubiquitous. Highly expressed in roots.

Its subcellular location is the endoplasmic reticulum membrane. The catalysed reaction is S-ubiquitinyl-[E2 ubiquitin-conjugating enzyme]-L-cysteine + [acceptor protein]-L-lysine = [E2 ubiquitin-conjugating enzyme]-L-cysteine + N(6)-ubiquitinyl-[acceptor protein]-L-lysine.. The protein operates within protein modification; protein ubiquitination. In terms of biological role, E3 ubiquitin-protein ligase. The sequence is that of E3 ubiquitin-protein ligase RMA3 (RMA3) from Arabidopsis thaliana (Mouse-ear cress).